The sequence spans 211 residues: MAVTVSAEEWVPRTRVGRMVKEGKITSIYELFEKNLPILEPEIVDYLVPDLKHEVLDVSLVQKVTDAGRVTRLRVLVVIGNEDGLVGLGMGKAKQMRFAIQKALANAKLNITPVRRGCGSWECTCGEPHSVPFTVRGKSGSVEVILKPAPRGTGLVAGDVAKAVLRYAGIKDVWTHTEGETRTTHNFAKATFNALKQTYKFLAPWDWVQQQ.

Residues 51–114 (LKHEVLDVSL…ANAKLNITPV (64 aa)) enclose the S5 DRBM domain.

This sequence belongs to the universal ribosomal protein uS5 family. As to quaternary structure, part of the 30S ribosomal subunit. Contacts protein S4.

Its function is as follows. With S4 and S12 plays an important role in translational accuracy. The chain is Small ribosomal subunit protein uS5 from Ignicoccus hospitalis (strain KIN4/I / DSM 18386 / JCM 14125).